The chain runs to 450 residues: Probable ECA polymerase (450 aa).

The next 11 helical transmembrane spans lie at 6 to 26 (FSGL…LTWF), 37 to 57 (VFFS…TSVL), 63 to 83 (VGVA…CFYA), 120 to 140 (LMGI…FLLF), 155 to 175 (GVAL…IYFL), 181 to 201 (AWLF…MIVG), 207 to 227 (IIIA…ISLW), 228 to 248 (MLVA…LKRY), 341 to 361 (LVVM…GLII), 378 to 398 (YKAA…IVLA), and 410 to 430 (VFFL…FWLF).

This sequence belongs to the WzyE family. In terms of assembly, probably part of a complex composed of WzxE, WzyE and WzzE.

It is found in the cell inner membrane. Its pathway is bacterial outer membrane biogenesis; enterobacterial common antigen biosynthesis. Its function is as follows. Probably involved in the polymerization of enterobacterial common antigen (ECA) trisaccharide repeat units. This is Probable ECA polymerase from Citrobacter koseri (strain ATCC BAA-895 / CDC 4225-83 / SGSC4696).